A 293-amino-acid polypeptide reads, in one-letter code: Bifunctional protein FolD (293 aa).

Residues 164-166 (GRS), Ser-193, and Thr-234 each bind NADP(+).

The protein belongs to the tetrahydrofolate dehydrogenase/cyclohydrolase family. As to quaternary structure, homodimer.

The catalysed reaction is (6R)-5,10-methylene-5,6,7,8-tetrahydrofolate + NADP(+) = (6R)-5,10-methenyltetrahydrofolate + NADPH. It catalyses the reaction (6R)-5,10-methenyltetrahydrofolate + H2O = (6R)-10-formyltetrahydrofolate + H(+). Its pathway is one-carbon metabolism; tetrahydrofolate interconversion. Functionally, catalyzes the oxidation of 5,10-methylenetetrahydrofolate to 5,10-methenyltetrahydrofolate and then the hydrolysis of 5,10-methenyltetrahydrofolate to 10-formyltetrahydrofolate. The protein is Bifunctional protein FolD of Azobacteroides pseudotrichonymphae genomovar. CFP2.